Consider the following 165-residue polypeptide: Type VI lipase immunity protein Tli3 (165 aa).

Positions 1-21 are cleaved as a signal peptide; sequence MKCKTLLIACLFGLGSAQALA.

In terms of assembly, interacts with the Tle3 toxin.

Its subcellular location is the periplasm. In terms of biological role, immunity protein that neutralizes the toxicity of the P.aeruginosa antibacterial toxin Tle3 in the periplasm to protect the cell from fratricide intoxication. This chain is Type VI lipase immunity protein Tli3, found in Pseudomonas aeruginosa (strain ATCC 15692 / DSM 22644 / CIP 104116 / JCM 14847 / LMG 12228 / 1C / PRS 101 / PAO1).